The primary structure comprises 188 residues: Ribosome-recycling factor (188 aa).

It belongs to the RRF family.

The protein resides in the cytoplasm. In terms of biological role, responsible for the release of ribosomes from messenger RNA at the termination of protein biosynthesis. May increase the efficiency of translation by recycling ribosomes from one round of translation to another. This is Ribosome-recycling factor from Anaeromyxobacter dehalogenans (strain 2CP-C).